A 539-amino-acid chain; its full sequence is MTKFIFVTGGVVSSLGKGITAASLGRLLKDRGLSVTIQKFDPYLNVDPGTMSPYQHGEVFVTDDGAETDLDLGHYERFIDINLNKYSNVTAGKVYSHVLKKERRGDYLGGTVQVIPHITNEIKERLLLAGESTNADVVITEIGGTTGDIESLPFIEAIRQIRSDLSRENVMYIHCTLLPFIKAAGEMKTKPTQHSVKELRGLGIQPDLIVVRTEYEMTQDLKDKIALFCDIPEQNVIECRDAESLYEIPLQLSKQHMDDLVIKRLDLNAKYDTQLDEWKHLLDVVNHLDGEITIGLVGKYVSLQDAYLSVVEALKHAGYPLHKDINVKWIDSSEVTDENAAEFLKDVDGILVPGGFGYRASEGKISAIRYARENNVPYFGICLGMQLATVEFARNVLGLEGAHSAELDPETPYPVIDLLPEQKDIEDLGGTLRLGLYPSEVKEGTLAYDIYGKKEIEERHRHRYEFNNDYREQMEDNGLVFSGVSPDGRRIEMVELPKNDFFFACQFHPEFLSRPNRPQPIFKAFIEAANKYKEAKENK.

The segment at 1–267 (MTKFIFVTGG…DDLVIKRLDL (267 aa)) is amidoligase domain. A CTP-binding site is contributed by Ser13. Ser13 is a UTP binding site. Position 14–19 (14–19 (SLGKGI)) interacts with ATP. Tyr54 contributes to the L-glutamine binding site. Position 71 (Asp71) interacts with ATP. Mg(2+) contacts are provided by Asp71 and Glu141. CTP contacts are provided by residues 148–150 (DIE), 188–193 (KTKPTQ), and Lys224. UTP contacts are provided by residues 188-193 (KTKPTQ) and Lys224. An ATP-binding site is contributed by 240-242 (RDA). Residues 293–535 (TIGLVGKYVS…IEAANKYKEA (243 aa)) form the Glutamine amidotransferase type-1 domain. Gly355 provides a ligand contact to L-glutamine. Cys382 (nucleophile; for glutamine hydrolysis) is an active-site residue. Residues 383–386 (LGMQ), Glu406, and Arg463 contribute to the L-glutamine site. Residues His508 and Glu510 contribute to the active site.

Belongs to the CTP synthase family. Homotetramer.

It catalyses the reaction UTP + L-glutamine + ATP + H2O = CTP + L-glutamate + ADP + phosphate + 2 H(+). It carries out the reaction L-glutamine + H2O = L-glutamate + NH4(+). The enzyme catalyses UTP + NH4(+) + ATP = CTP + ADP + phosphate + 2 H(+). It functions in the pathway pyrimidine metabolism; CTP biosynthesis via de novo pathway; CTP from UDP: step 2/2. Its activity is regulated as follows. Allosterically activated by GTP, when glutamine is the substrate; GTP has no effect on the reaction when ammonia is the substrate. The allosteric effector GTP functions by stabilizing the protein conformation that binds the tetrahedral intermediate(s) formed during glutamine hydrolysis. Inhibited by the product CTP, via allosteric rather than competitive inhibition. In terms of biological role, catalyzes the ATP-dependent amination of UTP to CTP with either L-glutamine or ammonia as the source of nitrogen. Regulates intracellular CTP levels through interactions with the four ribonucleotide triphosphates. The protein is CTP synthase of Staphylococcus carnosus (strain TM300).